The primary structure comprises 1401 residues: Condensin complex subunit 1 (1401 aa).

The segment at 1–603 is interactions with SMC2 and SMC4; sequence MAPQMYEFHL…TVCKNKPNMS (603 aa). A phosphoserine mark is found at serine 20 and serine 585. Polar residues predominate over residues 576 to 596; it reads STQEKNPRESTGNMVTGQTVC. 3 disordered regions span residues 576–611, 956–978, and 1303–1401; these read STQEKNPRESTGNMVTGQTVCKNKPNMSDPEESRGN, REEQEHKTKDPKEKNTSSETTME, and LEIG…RHRS. A compositionally biased stretch (basic and acidic residues) spans 956 to 971; sequence REEQEHKTKDPKEKNT. Residues 1308–1336 show a composition bias toward polar residues; the sequence is AGSQRAPSAKKPSTGSRYQPLASTASDND. Phosphoserine occurs at positions 1310, 1315, and 1330. The residue at position 1331 (threonine 1331) is a Phosphothreonine. At serine 1333 the chain carries Phosphoserine. Position 1339 is a phosphothreonine (threonine 1339). A Bipartite nuclear localization signal motif is present at residues 1342–1362; it reads PRRTTRRHPNTQQRASKKKPK. A compositionally biased stretch (basic residues) spans 1345–1362; it reads TTRRHPNTQQRASKKKPK. Residues serine 1366, serine 1367, serine 1370, serine 1371, and serine 1376 each carry the phosphoserine modification. Residues 1369–1382 show a composition bias toward acidic residues; that stretch reads ESSEEDLSAEMTED. Residues threonine 1384 and threonine 1389 each carry the phosphothreonine; by CDK1 modification. The residue at position 1395 (serine 1395) is a Phosphoserine.

Belongs to the CND1 (condensin subunit 1) family. Component of the condensin complex, which contains the SMC2 and SMC4 heterodimer, and three non SMC subunits that probably regulate the complex: NCAPH/BRRN1, NCAPD2/CAPD2 and NCAPG. Interacts with histones H1 and H3. Phosphorylated by CDK1. Its phosphorylation, as well as that of NCAPH and NCAPG subunits, activates the condensin complex and is required for chromosome condensation.

The protein resides in the nucleus. It localises to the cytoplasm. The protein localises to the chromosome. Functionally, regulatory subunit of the condensin complex, a complex required for conversion of interphase chromatin into mitotic-like condense chromosomes. The condensin complex probably introduces positive supercoils into relaxed DNA in the presence of type I topoisomerases and converts nicked DNA into positive knotted forms in the presence of type II topoisomerases. May target the condensin complex to DNA via its C-terminal domain. May promote the resolution of double-strand DNA catenanes (intertwines) between sister chromatids. Condensin-mediated compaction likely increases tension in catenated sister chromatids, providing directionality for type II topoisomerase-mediated strand exchanges toward chromatid decatenation. Required for decatenation of non-centromeric ultrafine DNA bridges during anaphase. Early in neurogenesis, may play an essential role to ensure accurate mitotic chromosome condensation in neuron stem cells, ultimately affecting neuron pool and cortex size. The chain is Condensin complex subunit 1 from Homo sapiens (Human).